Reading from the N-terminus, the 438-residue chain is uncharacterized protein (438 aa).

An N-terminal signal peptide occupies residues 1-19 (MKKLLLAASIICLASAGLA).

This is an uncharacterized protein from Rickettsia conorii (strain ATCC VR-613 / Malish 7).